A 757-amino-acid polypeptide reads, in one-letter code: MDVNPTLLFLKVPAQNAISTTFPYTGDPPYSHGTGTGYTMDTVNRTHQYSEKGKWTTNTETGAPQLNPIDGPLPEDNEPSGYAQTDCVLEAMAFLEESHPGIFENSCLETMEVVQQTRVDKLTQGRQTYDWTLNRNQPAATALANTIEVFRSNGLTANESGRLIDFLKDVMESMDKEEMEITTHFQRKRRVRDNMTKKMVTQRTIGKKKQRVNKRSYLIRALTLNTMTKDAERGKLKRRAIATPGMQIRGFVYFVETLARSICEKLEQSGLPVGGNEKKAKLANVVRKMMTNSQDTELSFTITGDNTKWNENQNPRMFLAMITYITKNQPEWFRNILSIAPIMFSNKMARLGKGYMFESKRMKLRTQIPAEMLASIDLKYFNESTRKKIEKIRPLLIDGTASLSPGMMMGMFNMLSTVLGVSILNLGQKKYTKTTYWWDGLQSSDDFALIVNAPNHEGIQAGVDRFYRTCKLVGINMSKKKSYINRTGTFEFTSFFYRYGFVANFSMELPSFGVSGINESADMSIGVTVIKNNMINNDLGPATAQMALQLFIKDYRYTYRCHRGDTQIQTRRSFELKKLWEQTRSKAGLLVSDGGPNLYNIRNLHIPEVCLKWELMDEDYQGRLCNPLNPFVSHKEIESVNNAVIMPAHGPAKSMEYDAVATTHSWIPKRNRSILNTSQRGILEDEQMYQKCCNLFEKFFPSSSYRRPVGISSMVEAMVSRARIDARIDFESGRIKKEEFSEIMKICFTIEELRRQK.

Positions 50 to 82 (SEKGKWTTNTETGAPQLNPIDGPLPEDNEPSGY) are disordered. The segment covering 55 to 64 (WTTNTETGAP) has biased composition (polar residues). 2 short sequence motifs (nuclear localization signal) span residues 187 to 195 (RKRRVRDNM) and 203 to 216 (RTIG…NKRS). The promoter-binding site stretch occupies residues 249–256 (RGFVYFVE). The 198-residue stretch at 286–483 (VRKMMTNSQD…GINMSKKKSY (198 aa)) folds into the RdRp catalytic domain.

The protein belongs to the influenza viruses polymerase PB1 family. As to quaternary structure, influenza RNA polymerase is composed of three subunits: PB1, PB2 and PA. Interacts (via N-terminus) with PA (via C-terminus). Interacts (via C-terminus) with PB2 (via N-terminus); this interaction is essential for transcription initiation. In terms of processing, phosphorylated by host PRKCA.

It localises to the host nucleus. Its subcellular location is the host cytoplasm. The enzyme catalyses RNA(n) + a ribonucleoside 5'-triphosphate = RNA(n+1) + diphosphate. In terms of biological role, RNA-dependent RNA polymerase which is responsible for replication and transcription of virus RNA segments. The transcription of viral mRNAs occurs by a unique mechanism called cap-snatching. 5' methylated caps of cellular mRNAs are cleaved after 10-13 nucleotides by PA. In turn, these short capped RNAs are used as primers by PB1 for transcription of viral mRNAs. During virus replication, PB1 initiates RNA synthesis and copy vRNA into complementary RNA (cRNA) which in turn serves as a template for the production of more vRNAs. This Influenza A virus (strain A/Memphis/110/1976 H3N2) protein is RNA-directed RNA polymerase catalytic subunit.